The chain runs to 154 residues: Ribosome maturation factor RimP (154 aa).

The protein belongs to the RimP family.

The protein resides in the cytoplasm. Functionally, required for maturation of 30S ribosomal subunits. The polypeptide is Ribosome maturation factor RimP (Prochlorococcus marinus (strain MIT 9303)).